Reading from the N-terminus, the 544-residue chain is MASALRRLVEQQQWRYLVSQSTRSPKLIHGFFSFSSKTNPNPNKQQQILIDYISKSLQSNDTWETLSTKFSSIDLSDSLIETILLRFKNPETAKQALSFFHWSSHTRNLRHGIKSYALTIHILVKARLLIDARALIESSLLNSPPDSDLVDSLLDTYEISSSTPLVFDLLVQCYAKIRYLELGFDVFKRLCDCGFTLSVITLNTLIHYSSKSKIDDLVWRIYECAIDKRIYPNEITIRIMIQVLCKEGRLKEVVDLLDRICGKRCLPSVIVNTSLVFRVLEEMRIEESMSLLKRLLMKNMVVDTIGYSIVVYAKAKEGDLVSARKVFDEMLQRGFSANSFVYTVFVRVCCEKGDVKEAERLLSEMEESGVSPYDETFNCLIGGFARFGWEEKGLEYCEVMVTRGLMPSCSAFNEMVKSVSKIENVNRANEILTKSIDKGFVPDEHTYSHLIRGFIEGNDIDQALKLFYEMEYRKMSPGFEVFRSLIVGLCTCGKVEAGEKYLKIMKKRLIEPNADIYDALIKAFQKIGDKTNADRVYNEMISVR.

A mitochondrion-targeting transit peptide spans 1 to 116; that stretch reads MASALRRLVE…RNLRHGIKSY (116 aa). PPR repeat units lie at residues 163–197, 198–232, 233–267, 268–302, 303–337, 338–372, 373–407, 408–442, 443–477, 478–512, and 513–544; these read TPLVFDLLVQCYAKIRYLELGFDVFKRLCDCGFTL, SVITLNTLIHYSSKSKIDDLVWRIYECAIDKRIYP, NEITIRIMIQVLCKEGRLKEVVDLLDRICGKRCLP, SVIVNTSLVFRVLEEMRIEESMSLLKRLLMKNMVV, DTIGYSIVVYAKAKEGDLVSARKVFDEMLQRGFSA, NSFVYTVFVRVCCEKGDVKEAERLLSEMEESGVSP, YDETFNCLIGGFARFGWEEKGLEYCEVMVTRGLMP, SCSAFNEMVKSVSKIENVNRANEILTKSIDKGFVP, DEHTYSHLIRGFIEGNDIDQALKLFYEMEYRKMSP, GFEVFRSLIVGLCTCGKVEAGEKYLKIMKKRLIEP, and NADIYDALIKAFQKIGDKTNADRVYNEMISVR.

It belongs to the PPR family. P subfamily.

It localises to the mitochondrion. The polypeptide is Pentatricopeptide repeat-containing protein At1g66345, mitochondrial (Arabidopsis thaliana (Mouse-ear cress)).